Consider the following 89-residue polypeptide: Small ribosomal subunit protein uS14 (89 aa).

It belongs to the universal ribosomal protein uS14 family. In terms of assembly, part of the 30S ribosomal subunit. Contacts proteins S3 and S10.

In terms of biological role, binds 16S rRNA, required for the assembly of 30S particles and may also be responsible for determining the conformation of the 16S rRNA at the A site. This is Small ribosomal subunit protein uS14 from Chlorobium phaeobacteroides (strain BS1).